Reading from the N-terminus, the 130-residue chain is Aspartate 1-decarboxylase (130 aa).

S25 acts as the Schiff-base intermediate with substrate; via pyruvic acid in catalysis. Position 25 is a pyruvic acid (Ser) (S25). T57 contacts substrate. Y58 acts as the Proton donor in catalysis. 73 to 75 contacts substrate; the sequence is GAA.

Belongs to the PanD family. As to quaternary structure, heterooctamer of four alpha and four beta subunits. Requires pyruvate as cofactor. In terms of processing, is synthesized initially as an inactive proenzyme, which is activated by self-cleavage at a specific serine bond to produce a beta-subunit with a hydroxyl group at its C-terminus and an alpha-subunit with a pyruvoyl group at its N-terminus.

The protein localises to the cytoplasm. The catalysed reaction is L-aspartate + H(+) = beta-alanine + CO2. It participates in cofactor biosynthesis; (R)-pantothenate biosynthesis; beta-alanine from L-aspartate: step 1/1. Catalyzes the pyruvoyl-dependent decarboxylation of aspartate to produce beta-alanine. In Myxococcus xanthus (strain DK1622), this protein is Aspartate 1-decarboxylase.